A 305-amino-acid chain; its full sequence is Autophagy-related protein 14 (305 aa).

Residues 34–147 (KMNLLILRQE…LDTLSHILAR (114 aa)) are a coiled coil.

This sequence belongs to the ATG14 family. In terms of assembly, component of the autophagy-specific VPS34 PI3-kinase complex I.

The protein localises to the preautophagosomal structure membrane. The protein resides in the vacuole membrane. In terms of biological role, required for cytoplasm to vacuole transport (Cvt) and autophagy as a part of the autophagy-specific VPS34 PI3-kinase complex I. This complex is essential to recruit the ATG8-phosphatidylinositol conjugate and the ATG12-ATG5 conjugate to the pre-autophagosomal structure. ATG14 mediates the specific binding of the VPS34 PI3-kinase complex I to the preautophagosomal structure (PAS). The protein is Autophagy-related protein 14 of Kluyveromyces marxianus (strain DMKU3-1042 / BCC 29191 / NBRC 104275) (Yeast).